A 114-amino-acid chain; its full sequence is Small ribosomal subunit protein bS6 (114 aa).

This sequence belongs to the bacterial ribosomal protein bS6 family.

Its function is as follows. Binds together with bS18 to 16S ribosomal RNA. The sequence is that of Small ribosomal subunit protein bS6 from Bacteroides thetaiotaomicron (strain ATCC 29148 / DSM 2079 / JCM 5827 / CCUG 10774 / NCTC 10582 / VPI-5482 / E50).